Here is a 69-residue protein sequence, read N- to C-terminus: Large ribosomal subunit protein uL29 (69 aa).

It belongs to the universal ribosomal protein uL29 family.

The polypeptide is Large ribosomal subunit protein uL29 (Natronomonas pharaonis (strain ATCC 35678 / DSM 2160 / CIP 103997 / JCM 8858 / NBRC 14720 / NCIMB 2260 / Gabara) (Halobacterium pharaonis)).